Consider the following 142-residue polypeptide: Alpha-lactalbumin (142 aa).

An N-terminal signal peptide occupies residues 1-19 (MRFFVPLFLVGILFPAILA). The 123-residue stretch at 20 to 142 (KQFTKCELSQ…KLEQWLCEKL (123 aa)) folds into the C-type lysozyme domain. Disulfide bonds link cysteine 25–cysteine 139, cysteine 47–cysteine 130, cysteine 80–cysteine 96, and cysteine 92–cysteine 110. Threonine 57 and glutamine 58 together coordinate Ca(2+). N-linked (GlcNAc...) asparagine glycosylation occurs at asparagine 64. Position 68 (glutamate 68) interacts with Zn(2+). Residue asparagine 90 is glycosylated (N-linked (GlcNAc...) asparagine; atypical; partial). Ca(2+) contacts are provided by lysine 98, leucine 100, aspartate 101, aspartate 102, aspartate 103, aspartate 106, and aspartate 107. A Zn(2+)-binding site is contributed by glutamate 135.

It belongs to the glycosyl hydrolase 22 family. As to quaternary structure, lactose synthase (LS) is a heterodimer of a catalytic component, beta1,4-galactosyltransferase (beta4Gal-T1) and a regulatory component, alpha-lactalbumin (LA). Mammary gland specific. Secreted in milk.

It is found in the secreted. Its function is as follows. Regulatory subunit of lactose synthase, changes the substrate specificity of galactosyltransferase in the mammary gland making glucose a good acceptor substrate for this enzyme. This enables LS to synthesize lactose, the major carbohydrate component of milk. In other tissues, galactosyltransferase transfers galactose onto the N-acetylglucosamine of the oligosaccharide chains in glycoproteins. This chain is Alpha-lactalbumin (LALBA), found in Homo sapiens (Human).